Reading from the N-terminus, the 374-residue chain is DNA replication and repair protein RecF (374 aa).

Residue 30–37 (GHNAQGKT) participates in ATP binding.

It belongs to the RecF family.

Its subcellular location is the cytoplasm. In terms of biological role, the RecF protein is involved in DNA metabolism; it is required for DNA replication and normal SOS inducibility. RecF binds preferentially to single-stranded, linear DNA. It also seems to bind ATP. In Limosilactobacillus reuteri (strain DSM 20016) (Lactobacillus reuteri), this protein is DNA replication and repair protein RecF.